The following is a 329-amino-acid chain: Ankyrin repeat and SOCS box protein 5 (329 aa).

ANK repeat units lie at residues Ala69 to Ala98, Asp102 to Ala131, Asp135 to Leu164, Cys167 to Gln196, His200 to Lys229, and Tyr232 to Ala261. In terms of domain architecture, SOCS box spans Met278 to Arg329.

The protein belongs to the ankyrin SOCS box (ASB) family. As to expression, expressed in endothelial and smooth muscle cells of collateral arteries as well as in satellite cells.

Its pathway is protein modification; protein ubiquitination. Its function is as follows. May be a substrate-recognition component of a SCF-like ECS (Elongin-Cullin-SOCS-box protein) E3 ubiquitin-protein ligase complex which mediates the ubiquitination and subsequent proteasomal degradation of target proteins. May play a role in the initiation of arteriogenesis. This Oryctolagus cuniculus (Rabbit) protein is Ankyrin repeat and SOCS box protein 5 (ASB5).